The following is a 567-amino-acid chain: uncharacterized protein (567 aa).

The segment at 1 to 26 (MPSEKATTRHLPGAVETLSPRTGRRP) is disordered. 6 helical membrane passes run 57-77 (AILV…TVAF), 90-110 (VSFG…TYWL), 142-162 (VALA…IIYG), 173-193 (LFSM…LTEF), 221-241 (MLVW…TAIF), and 257-277 (VLIL…ILAW). The region spanning 278–329 (LTATPVRVVREALNRVEQGDLSGDLVVFDGTELGELQRGFNRMVEGLRERER) is the HAMP domain. Positions 361–485 (AVVFVDIVGS…EPVNEAARLC (125 aa)) constitute a Guanylate cyclase domain.

Belongs to the adenylyl cyclase class-3 family.

The protein resides in the cell membrane. This is an uncharacterized protein from Mycobacterium tuberculosis (strain ATCC 25618 / H37Rv).